Consider the following 165-residue polypeptide: uncharacterized protein (165 aa).

This is an uncharacterized protein from Invertebrate iridescent virus 6 (IIV-6).